The chain runs to 346 residues: Beta-ketoacyl-[acyl-carrier-protein] synthase III (346 aa).

Catalysis depends on residues C120 and H256. The tract at residues 257-261 is ACP-binding; sequence QANIR. Residue N286 is part of the active site.

This sequence belongs to the thiolase-like superfamily. FabH family. In terms of assembly, homodimer.

The protein resides in the cytoplasm. The enzyme catalyses malonyl-[ACP] + acetyl-CoA + H(+) = 3-oxobutanoyl-[ACP] + CO2 + CoA. It participates in lipid metabolism; fatty acid biosynthesis. In terms of biological role, catalyzes the condensation reaction of fatty acid synthesis by the addition to an acyl acceptor of two carbons from malonyl-ACP. Catalyzes the first condensation reaction which initiates fatty acid synthesis and may therefore play a role in governing the total rate of fatty acid production. Possesses both acetoacetyl-ACP synthase and acetyl transacylase activities. Its substrate specificity determines the biosynthesis of branched-chain and/or straight-chain of fatty acids. This Deinococcus geothermalis (strain DSM 11300 / CIP 105573 / AG-3a) protein is Beta-ketoacyl-[acyl-carrier-protein] synthase III.